The primary structure comprises 188 residues: Protein SSX5 (188 aa).

Positions 20–83 (KMQKAFDDIA…KRVADFQGND (64 aa)) constitute a KRAB-related domain. Positions 78 to 188 (DFQGNDFDND…EISDPQEDDE (111 aa)) are disordered. The span at 112-122 (TPEKPAEEGND) shows a compositional bias: basic and acidic residues. The segment covering 144 to 155 (KLNTSEKVNKTS) has biased composition (polar residues). Positions 156-170 (GPKRGKHAWTHRVRE) are enriched in basic residues. Residues 179–188 (EISDPQEDDE) are compositionally biased toward acidic residues.

It belongs to the SSX family.

Could act as a modulator of transcription. This chain is Protein SSX5 (SSX5), found in Homo sapiens (Human).